Consider the following 413-residue polypeptide: MRAEIISIGTELLLGEIINTNAQYIARELASLGIDVYHQSVIGDNETRLSEAFETAFKRSDVVITTGGLGPTKDDMTKETAASFFGKKLIPHEESLKKIEAYFKGRGLNVNEGNRKQGYFPEGSIVLPNPNGTAPACIIEENNKKLILLPGPPREMIPLFETQVLPYLKKFQDKFFSFKVLNVCGIGEGEMEEAIMDIVDHQTNPTVAPYAKPNGLTLRIAASGHTQKEADELIHPMEEQIRERLGLNIYGEDDISLEEIVAKILIEKKLTISIAESCTGGFLSGRLVNYPGISSVFMEGIVTYSNESKVKYLGVNPQTIEKYGAVSEEVAREMAEGICKSAHTNIGLSVTGLAGPSGGREDKPIGLVYVGICINGVTTVKELNLGGSRNRIRSLATTYTLDLLRREVLNRSL.

The protein belongs to the CinA family.

In Alkaliphilus oremlandii (strain OhILAs) (Clostridium oremlandii (strain OhILAs)), this protein is Putative competence-damage inducible protein.